The chain runs to 437 residues: MANVVVIGAQWGDEGKGKITDLLSRSADVVVRYQGGVNAGHTIVVDGRVLKLHLIPSGILYPDTTCLIGSGTVVDPKVMLGELDMLISNGIDISGLQLASTAHITMPYHRLLDLAMEKQRGERKIGTTGRGIGPTYADKSQRSGIRVLDLLDEARLRDRLEGPLSEKNQLLETIYGEKPLDPEEIIREYLAYGKRLAPHVVDCTRAIHEAASDRKNILFEGAQGTLLDLDHGTYPYVTSSNPVSGGACIGAGVGPTLIDRVIGVAKAYTTRVGEGPFPTELSGSLNDQLCDRGGEFGTTTGRRRRCGWFDGVIGRYAVQVNGLDCLAITKLDVLDEMDKIQVSVAYELDGERIDYFPSCSEDFARCKPIFETLPGWQCSTAECRRLEDLPAPAMDYLRFLADLMDVPIAIVSLGASRDQTIVVEDPIHGPKRALLSA.

GTP is bound by residues 12–18 and 40–42; these read GDEGKGK and GHT. Catalysis depends on Asp-13, which acts as the Proton acceptor. The Mg(2+) site is built by Asp-13 and Gly-40. Residues 13 to 16, 38 to 41, Thr-128, Arg-142, Gln-223, Thr-238, and Arg-302 each bind IMP; these read DEGK and NAGH. His-41 acts as the Proton donor in catalysis. 298-304 provides a ligand contact to substrate; that stretch reads TTTGRRR. GTP is bound by residues Arg-304, 330 to 332, and 412 to 414; these read KLD and SLG.

The protein belongs to the adenylosuccinate synthetase family. As to quaternary structure, homodimer. It depends on Mg(2+) as a cofactor.

The protein resides in the cytoplasm. It catalyses the reaction IMP + L-aspartate + GTP = N(6)-(1,2-dicarboxyethyl)-AMP + GDP + phosphate + 2 H(+). The protein operates within purine metabolism; AMP biosynthesis via de novo pathway; AMP from IMP: step 1/2. In terms of biological role, plays an important role in the de novo pathway of purine nucleotide biosynthesis. Catalyzes the first committed step in the biosynthesis of AMP from IMP. This is Adenylosuccinate synthetase from Synechococcus sp. (strain CC9311).